The sequence spans 380 residues: MSIASTQADKKSSNHPDKIKISGVILVDKPQGMTSQQVVSKVKYLFKSPNHDSKKAGHTGTLDPMATGLLPICLGEATKFSHYQLDADKSYQATILLGSQTDTGDADGQVTAEATISAFDDTMLDKIAQQFLGAQQQIPPMYSALKKDGKKLYEYARAGIEVDRPPRDIILKAIELKAIDEQQIQLTVTCSKGTYVRVLAEDIAKAIGTLGHLTALSRLQVGDFKIDETITLANLEALALEQRQTYLLPVDACIDINAELTLSSEQCERVQMGQRLNVIDQLTNDLQSYITSAIEQHLSTSNKNAAVNQNVEDDNDDNDDNDDNDDNDDNDDNDDNDDNAQQLLHEIPVDIRLIDEHGTFIGLGAVSLNGRLQPKKLIQL.

Asp63 serves as the catalytic Nucleophile. The segment at 309–339 is disordered; it reads QNVEDDNDDNDDNDDNDDNDDNDDNDDNDDN. A compositionally biased stretch (acidic residues) spans 311–338; the sequence is VEDDNDDNDDNDDNDDNDDNDDNDDNDD.

It belongs to the pseudouridine synthase TruB family. Type 1 subfamily.

It catalyses the reaction uridine(55) in tRNA = pseudouridine(55) in tRNA. Functionally, responsible for synthesis of pseudouridine from uracil-55 in the psi GC loop of transfer RNAs. The polypeptide is tRNA pseudouridine synthase B (Psychrobacter arcticus (strain DSM 17307 / VKM B-2377 / 273-4)).